A 395-amino-acid polypeptide reads, in one-letter code: Receptor-like cytoplasmic kinase 176 (395 aa).

A disordered region spans residues 1–45 (MGNCWGAKISSESPCRSASSPSGGTSKYASNSSVSAASVPPTPRS). Low complexity-rich tracts occupy residues 10–22 (SSES…SSPS) and 29–39 (ASNSSVSAASV). The Protein kinase domain maps to 70 to 355 (FRPDSVLGEG…EQVVAVLEQL (286 aa)). Residues 76–84 (LGEGGFGSV) and Lys108 each bind ATP. The active-site Proton acceptor is Asp205. The tract at residues 359-395 (KETGANPQLQKKSSSKNAGSNGSKPSSKGKPANARLV) is disordered. Residues 369-395 (KKSSSKNAGSNGSKPSSKGKPANARLV) show a composition bias toward low complexity.

Belongs to the protein kinase superfamily. Ser/Thr protein kinase family. As to quaternary structure, interacts with CERK1.

It carries out the reaction L-seryl-[protein] + ATP = O-phospho-L-seryl-[protein] + ADP + H(+). It catalyses the reaction L-threonyl-[protein] + ATP = O-phospho-L-threonyl-[protein] + ADP + H(+). In terms of biological role, functions downstream of CERK1 in the microbial peptidoglycans (PGNs) and fungal chitin signaling pathways that mediate innate immunity. Participates in the activation of defense genes during response to PGN and chitin. This Oryza sativa subsp. japonica (Rice) protein is Receptor-like cytoplasmic kinase 176.